The following is a 230-amino-acid chain: Sodium channel modifier 1 (230 aa).

A Phosphoserine modification is found at Ser-2. The Bipartite nuclear localization signal motif lies at 4-20; the sequence is KREGDDWSQLNVLKKRR. The Matrin-type zinc finger occupies 42 to 74; the sequence is FACAICPHRPVLDTLAMLTAHRAGKKHLSSLQL. A Glycyl lysine isopeptide (Lys-Gly) (interchain with G-Cter in SUMO2) cross-link involves residue Lys-67. Disordered stretches follow at residues 76-106, 129-186, and 200-230; these read YGKK…EAPL, RRKY…SPTR, and GWIP…LPLD. The span at 81-102 shows a compositional bias: basic and acidic residues; it reads PGKERKQNPKHQNELRREETKA. Phosphoserine is present on Ser-144. Residues 164–174 are compositionally biased toward low complexity; the sequence is PAAGPQAEESA. Ser-183 carries the post-translational modification Phosphoserine. Positions 188-230 are required for interaction with LUC7L2; that stretch reads RALDHYLTLRSSGWIPDGRGRWVKDENVEFDSDEEEPPDLPLD. Basic and acidic residues predominate over residues 205-214; the sequence is GRGRWVKDEN. Acidic residues predominate over residues 215 to 230; it reads VEFDSDEEEPPDLPLD. A Phosphoserine modification is found at Ser-219.

Component of the minor spliceosome, which splices U12-type introns. Within this complex, interacts with RNF113A, as well as with SF3B1/SF3b155, SF3B2/SF3b145, SF3B3/SF3b130 and CDC5L. May interact with LUC7L2 and SNRNP70.

It localises to the nucleus. It is found in the nucleoplasm. The protein resides in the nucleus speckle. Functionally, as a component of the minor spliceosome, involved in the splicing of U12-type introns in pre-mRNAs. Plays a role in the regulation of primary cilia length and Hedgehog signaling. This chain is Sodium channel modifier 1 (SCNM1), found in Homo sapiens (Human).